A 757-amino-acid polypeptide reads, in one-letter code: Xaa-Pro dipeptidyl-peptidase (757 aa).

Catalysis depends on charge relay system residues S348, D468, and H498.

Belongs to the peptidase S15 family. As to quaternary structure, homodimer.

The protein resides in the cytoplasm. It carries out the reaction Hydrolyzes Xaa-Pro-|- bonds to release unblocked, N-terminal dipeptides from substrates including Ala-Pro-|-p-nitroanilide and (sequentially) Tyr-Pro-|-Phe-Pro-|-Gly-Pro-|-Ile.. Removes N-terminal dipeptides sequentially from polypeptides having unsubstituted N-termini provided that the penultimate residue is proline. The protein is Xaa-Pro dipeptidyl-peptidase of Streptococcus pneumoniae (strain ATCC 700669 / Spain 23F-1).